A 306-amino-acid polypeptide reads, in one-letter code: tRNA pseudouridine synthase B (306 aa).

The active-site Nucleophile is the D43.

The protein belongs to the pseudouridine synthase TruB family. Type 1 subfamily.

It carries out the reaction uridine(55) in tRNA = pseudouridine(55) in tRNA. Functionally, responsible for synthesis of pseudouridine from uracil-55 in the psi GC loop of transfer RNAs. The polypeptide is tRNA pseudouridine synthase B (Lacticaseibacillus casei (strain BL23) (Lactobacillus casei)).